The chain runs to 990 residues: Putative ariadne-like RING finger protein R811 (990 aa).

The region spanning aspartate 8–leucine 201 is the VWFA domain. The segment at glutamate 797–aspartate 990 is TRIAD supradomain. Zn(2+)-binding residues include cysteine 801, cysteine 804, cysteine 827, and cysteine 830. An RING-type 1 zinc finger spans residues cysteine 801 to cysteine 854. An IBR-type zinc finger spans residues lysine 855 to cysteine 903. Positions 930 and 935 each coordinate Zn(2+). An RING-type 2; atypical zinc finger spans residues cysteine 930–cysteine 961. Cysteine 945 is an active-site residue. Positions 950 and 953 each coordinate Zn(2+).

In Acanthamoeba polyphaga (Amoeba), this protein is Putative ariadne-like RING finger protein R811.